Reading from the N-terminus, the 29-residue chain is Cyclotide vibi-D (29 aa).

The cyclopeptide (Gly-Asn) cross-link spans 1-29; sequence GLPVCGETCFGGRCNTPGCTCSYPICTRN. 3 disulfide bridges follow: Cys5/Cys19, Cys9/Cys21, and Cys14/Cys26.

This is a cyclic peptide.

In terms of biological role, probably participates in a plant defense mechanism. Has moderate levels of cytotoxic activity, active against a human lymphoma cell line with an IC(50) of &gt;30 uM. This Viola biflora (Yellow wood violet) protein is Cyclotide vibi-D.